A 398-amino-acid chain; its full sequence is MKTLVGFYILCFLIGQDLPFLAADDVNVINDSTQNLCFANRLSDFLPPPYSNISDNMPCTPLWNTFVLRYSENRDNVMTIIVSALYTTGWVGIGFSKEGRMVGSSAMIGWISKKGHAKIKQYYLQGTERDQVVPDQGELQLQKVPPVVALHGAMIYLAFQVKFAVRVPRRAVILAFSTAYPSKLGRLTKHDDKTTVIVDFSKASGATSIKTTTSTEKTKHGVMAILGWGFLLPVGAILARYLRHKDPLWYYLHIGFQFTGFIFGLAAVILGIQLYNRIQPDIPAHRGIGIFLLVLSTLQVLAFFARPQKETKMRRYWNWYHHWIGRISLFFGAVNIVLGIRMADNGGDGWKIGYGFVLSVTLLAFVVLEIFRIRGTIGSPSSRSPPSFETHPSSSTSV.

The N-terminal stretch at 1-23 (MKTLVGFYILCFLIGQDLPFLAA) is a signal peptide. The 114-residue stretch at 64–177 (NTFVLRYSEN…PRRAVILAFS (114 aa)) folds into the DOMON domain. Positions 184 to 377 (LGRLTKHDDK…LEIFRIRGTI (194 aa)) constitute a Cytochrome b561 domain. His-220 provides a ligand contact to heme b. 2 helical membrane-spanning segments follow: residues 222-242 (VMAI…ARYL) and 252-272 (LHIG…ILGI). Positions 253 and 285 each coordinate heme b. The next 3 membrane-spanning stretches (helical) occupy residues 287–307 (GIGI…FARP), 320–340 (YHHW…VLGI), and 351–371 (KIGY…LEIF). Heme b is bound at residue His-321.

It depends on heme b as a cofactor.

It localises to the membrane. May act as a catecholamine-responsive trans-membrane electron transporter. This chain is Cytochrome b561 and DOMON domain-containing protein At3g61750, found in Arabidopsis thaliana (Mouse-ear cress).